Consider the following 47-residue polypeptide: MARNRCRSPSQSRCRRPRRRCRRRIRCCRRQRRVCCRRYTTTRCARQ.

This sequence belongs to the protamine P1 family. Testis.

The protein localises to the nucleus. It localises to the chromosome. In terms of biological role, protamines substitute for histones in the chromatin of sperm during the haploid phase of spermatogenesis. They compact sperm DNA into a highly condensed, stable and inactive complex. The chain is Sperm protamine P1 (PRM1) from Orcinus orca (Killer whale).